A 619-amino-acid polypeptide reads, in one-letter code: 1-deoxy-D-xylulose-5-phosphate synthase (619 aa).

Residues His74 and 115 to 117 each bind thiamine diphosphate; that span reads GHS. Position 146 (Asp146) interacts with Mg(2+). Thiamine diphosphate contacts are provided by residues 147–148, Asn175, and Tyr285; that span reads GA. Residue Asn175 participates in Mg(2+) binding. A disordered region spans residues 289 to 312; the sequence is EKSPSKYHAVPPRANEKEKPSKPC. Over residues 302 to 312 the composition is skewed to basic and acidic residues; sequence ANEKEKPSKPC. Glu365 provides a ligand contact to thiamine diphosphate.

This sequence belongs to the transketolase family. DXPS subfamily. In terms of assembly, homodimer. It depends on Mg(2+) as a cofactor. Thiamine diphosphate is required as a cofactor.

It catalyses the reaction D-glyceraldehyde 3-phosphate + pyruvate + H(+) = 1-deoxy-D-xylulose 5-phosphate + CO2. It functions in the pathway metabolic intermediate biosynthesis; 1-deoxy-D-xylulose 5-phosphate biosynthesis; 1-deoxy-D-xylulose 5-phosphate from D-glyceraldehyde 3-phosphate and pyruvate: step 1/1. Functionally, catalyzes the acyloin condensation reaction between C atoms 2 and 3 of pyruvate and glyceraldehyde 3-phosphate to yield 1-deoxy-D-xylulose-5-phosphate (DXP). In Clostridium botulinum (strain Eklund 17B / Type B), this protein is 1-deoxy-D-xylulose-5-phosphate synthase.